We begin with the raw amino-acid sequence, 392 residues long: Phospho-N-acetylmuramoyl-pentapeptide-transferase (392 aa).

10 helical membrane-spanning segments follow: residues 24–44, 76–96, 100–120, 137–157, 193–213, 225–245, 262–282, 289–309, 314–334, and 369–389; these read YLTF…LLAG, TMGG…WFDL, FVWV…VDDW, YFWQ…CISE, VSYP…IVGS, GLAI…AYVT, AGEL…FLWF, VFMG…IAII, IVLA…MLQV, and QVVV…LTTL.

This sequence belongs to the glycosyltransferase 4 family. MraY subfamily. Mg(2+) is required as a cofactor.

Its subcellular location is the cell inner membrane. It carries out the reaction UDP-N-acetyl-alpha-D-muramoyl-L-alanyl-gamma-D-glutamyl-meso-2,6-diaminopimeloyl-D-alanyl-D-alanine + di-trans,octa-cis-undecaprenyl phosphate = di-trans,octa-cis-undecaprenyl diphospho-N-acetyl-alpha-D-muramoyl-L-alanyl-D-glutamyl-meso-2,6-diaminopimeloyl-D-alanyl-D-alanine + UMP. Its pathway is cell wall biogenesis; peptidoglycan biosynthesis. Its function is as follows. Catalyzes the initial step of the lipid cycle reactions in the biosynthesis of the cell wall peptidoglycan: transfers peptidoglycan precursor phospho-MurNAc-pentapeptide from UDP-MurNAc-pentapeptide onto the lipid carrier undecaprenyl phosphate, yielding undecaprenyl-pyrophosphoryl-MurNAc-pentapeptide, known as lipid I. This is Phospho-N-acetylmuramoyl-pentapeptide-transferase from Paracidovorax citrulli (strain AAC00-1) (Acidovorax citrulli).